The chain runs to 401 residues: L-threonine ammonia-lyase (401 aa).

Residue Lys-51 is modified to N6-(pyridoxal phosphate)lysine. Residues Asn-78, 178 to 181 (GGGL), and Ser-301 contribute to the pyridoxal 5'-phosphate site. The region spanning 326-401 (FIETFVMDRP…AKGYEVRIVG (76 aa)) is the ACT domain.

It belongs to the serine/threonine dehydratase family. Homotetramer. The cofactor is pyridoxal 5'-phosphate.

It carries out the reaction L-threonine = 2-oxobutanoate + NH4(+). The catalysed reaction is L-serine = pyruvate + NH4(+). The protein operates within amino-acid biosynthesis; L-isoleucine biosynthesis; 2-oxobutanoate from L-threonine: step 1/1. Its activity is regulated as follows. Activity is insensitive to allosteric regulators L-valine and L-isoleucine at low concentrations, while these L-amino acids are inhibitors at high concentrations. Is insensitive to ammonium chloride and AMP. Inhibited in the presence of aminoxyacetic acid (AOAA), an inhibitor of pyridoxal phosphate-dependent enzymes. Its function is as follows. Catalyzes the conversion of L-threonine to 2-oxobutanoate and ammonia. Can also use L-serine, but the catalytic efficiency toward L-threonine is about sixfold higher than that toward L-serine. Also shows weak activity toward L-allo-threonine, but cannot use the corresponding D-amino acids. Does not exhibit racemase activity toward various amino acids, including serine. Physiologically, is likely involved in the threonine-dependent pathway of isoleucine biosynthesis. This Thermotoga maritima (strain ATCC 43589 / DSM 3109 / JCM 10099 / NBRC 100826 / MSB8) protein is L-threonine ammonia-lyase.